Reading from the N-terminus, the 126-residue chain is Large ribosomal subunit protein uL14m (126 aa).

Belongs to the universal ribosomal protein uL14 family. In terms of assembly, component of the mitochondrial large ribosomal subunit (mt-LSU). Mature yeast 74S mitochondrial ribosomes consist of a small (37S) and a large (54S) subunit. The 37S small subunit contains a 15S ribosomal RNA (15S mt-rRNA) and at least 32 different proteins. The 54S large subunit contains a 21S rRNA (21S mt-rRNA) and at least 45 different proteins.

The protein localises to the mitochondrion. Its function is as follows. Component of the mitochondrial ribosome (mitoribosome), a dedicated translation machinery responsible for the synthesis of mitochondrial genome-encoded proteins, including at least some of the essential transmembrane subunits of the mitochondrial respiratory chain. The mitoribosomes are attached to the mitochondrial inner membrane and translation products are cotranslationally integrated into the membrane. The protein is Large ribosomal subunit protein uL14m (mrpl38) of Schizosaccharomyces pombe (strain 972 / ATCC 24843) (Fission yeast).